The primary structure comprises 213 residues: Peptidyl-tRNA hydrolase (213 aa).

A tRNA-binding site is contributed by Y26. Catalysis depends on H31, which acts as the Proton acceptor. Positions 78, 80, and 126 each coordinate tRNA.

The protein belongs to the PTH family. As to quaternary structure, monomer.

The protein localises to the cytoplasm. It catalyses the reaction an N-acyl-L-alpha-aminoacyl-tRNA + H2O = an N-acyl-L-amino acid + a tRNA + H(+). In terms of biological role, hydrolyzes ribosome-free peptidyl-tRNAs (with 1 or more amino acids incorporated), which drop off the ribosome during protein synthesis, or as a result of ribosome stalling. Its function is as follows. Catalyzes the release of premature peptidyl moieties from peptidyl-tRNA molecules trapped in stalled 50S ribosomal subunits, and thus maintains levels of free tRNAs and 50S ribosomes. The sequence is that of Peptidyl-tRNA hydrolase from Nostoc punctiforme (strain ATCC 29133 / PCC 73102).